Reading from the N-terminus, the 102-residue chain is RNA-binding protein Hfq (102 aa).

In terms of domain architecture, Sm spans 9-68 (DPFLNALRRERVPVSIYLVNGIKLQGQIESFDQFVILLKNTVSQMVYKHAISTVVPSRPV). The interval 63 to 102 (VPSRPVSHHSNNAGGGTSSNYHHGSSAQNTSAQQDSEETE) is disordered. A compositionally biased stretch (polar residues) spans 70 to 96 (HHSNNAGGGTSSNYHHGSSAQNTSAQQ).

This sequence belongs to the Hfq family. As to quaternary structure, homohexamer.

In terms of biological role, RNA chaperone that binds small regulatory RNA (sRNAs) and mRNAs to facilitate mRNA translational regulation in response to envelope stress, environmental stress and changes in metabolite concentrations. Also binds with high specificity to tRNAs. This chain is RNA-binding protein Hfq, found in Escherichia fergusonii (strain ATCC 35469 / DSM 13698 / CCUG 18766 / IAM 14443 / JCM 21226 / LMG 7866 / NBRC 102419 / NCTC 12128 / CDC 0568-73).